Here is a 261-residue protein sequence, read N- to C-terminus: 3-methyl-2-oxobutanoate hydroxymethyltransferase (261 aa).

Residues D44 and D83 each coordinate Mg(2+). Residues D44–S45, D83, and K113 contribute to the 3-methyl-2-oxobutanoate site. A Mg(2+)-binding site is contributed by E115. Catalysis depends on E183, which acts as the Proton acceptor.

It belongs to the PanB family. Homodecamer; pentamer of dimers. Requires Mg(2+) as cofactor.

It localises to the cytoplasm. The catalysed reaction is 3-methyl-2-oxobutanoate + (6R)-5,10-methylene-5,6,7,8-tetrahydrofolate + H2O = 2-dehydropantoate + (6S)-5,6,7,8-tetrahydrofolate. It participates in cofactor biosynthesis; (R)-pantothenate biosynthesis; (R)-pantoate from 3-methyl-2-oxobutanoate: step 1/2. Functionally, catalyzes the reversible reaction in which hydroxymethyl group from 5,10-methylenetetrahydrofolate is transferred onto alpha-ketoisovalerate to form ketopantoate. This Cyanothece sp. (strain PCC 7425 / ATCC 29141) protein is 3-methyl-2-oxobutanoate hydroxymethyltransferase.